A 699-amino-acid chain; its full sequence is Kinesin-II 85 kDa subunit (699 aa).

Positions 10 to 342 (NVRVVVRCRP…LRYANRAKNI (333 aa)) constitute a Kinesin motor domain. 97 to 104 (GQTGTGKT) contacts ATP. A coiled-coil region spans residues 341 to 619 (NIKNKAKINE…EDIGEWQLKC (279 aa)). 3 disordered regions span residues 369 to 415 (KQIS…LSPE), 432 to 456 (EEKK…ESEL), and 660 to 699 (GMKY…ALLQ). Positions 376 to 395 (EGLDDDEESGSEESGDEEAG) are enriched in acidic residues. Positions 400 to 411 (KKKRKGKNPKRK) are enriched in basic residues. The globular stretch occupies residues 620 to 699 (VAYTGNNMRK…MASSIDALLQ (80 aa)). Over residues 667–679 (QGKSGRPKTSSGR) the composition is skewed to polar residues.

Belongs to the TRAFAC class myosin-kinesin ATPase superfamily. Kinesin family. Kinesin II subfamily. In terms of assembly, heterotrimer of a 115 kDa subunit (KAP115) and two kinesin-like subunits of 95 kDa (KRP95) and 85 kDa (KRP85). The N-terminus is blocked.

The protein resides in the cytoplasm. Its subcellular location is the cytoskeleton. This chain is Kinesin-II 85 kDa subunit (KRP85), found in Strongylocentrotus purpuratus (Purple sea urchin).